The primary structure comprises 95 residues: Co-chaperonin GroES (95 aa).

It belongs to the GroES chaperonin family. In terms of assembly, heptamer of 7 subunits arranged in a ring. Interacts with the chaperonin GroEL.

Its subcellular location is the cytoplasm. In terms of biological role, together with the chaperonin GroEL, plays an essential role in assisting protein folding. The GroEL-GroES system forms a nano-cage that allows encapsulation of the non-native substrate proteins and provides a physical environment optimized to promote and accelerate protein folding. GroES binds to the apical surface of the GroEL ring, thereby capping the opening of the GroEL channel. The chain is Co-chaperonin GroES from Streptococcus equi subsp. equi (strain 4047).